Consider the following 122-residue polypeptide: Small ribosomal subunit protein uS13c (122 aa).

The interval 102–122 is disordered; sequence RTRTNARTRRGAKKTVAGKKK.

It belongs to the universal ribosomal protein uS13 family. As to quaternary structure, part of the 30S ribosomal subunit.

It is found in the plastid. It localises to the chloroplast. Its function is as follows. Located at the top of the head of the 30S subunit, it contacts several helices of the 16S rRNA. In Guillardia theta (Cryptophyte), this protein is Small ribosomal subunit protein uS13c.